The primary structure comprises 39 residues: Photosystem II reaction center protein L (39 aa).

A helical transmembrane segment spans residues Ser-18–Phe-38.

Belongs to the PsbL family. In terms of assembly, PSII is composed of 1 copy each of membrane proteins PsbA, PsbB, PsbC, PsbD, PsbE, PsbF, PsbH, PsbI, PsbJ, PsbK, PsbL, PsbM, PsbT, PsbX, PsbY, Psb30/Ycf12, peripheral proteins PsbO, CyanoQ (PsbQ), PsbU, PsbV and a large number of cofactors. It forms dimeric complexes.

It is found in the cellular thylakoid membrane. Functionally, one of the components of the core complex of photosystem II (PSII). PSII is a light-driven water:plastoquinone oxidoreductase that uses light energy to abstract electrons from H(2)O, generating O(2) and a proton gradient subsequently used for ATP formation. It consists of a core antenna complex that captures photons, and an electron transfer chain that converts photonic excitation into a charge separation. This subunit is found at the monomer-monomer interface and is required for correct PSII assembly and/or dimerization. This Prochlorococcus marinus (strain MIT 9313) protein is Photosystem II reaction center protein L.